We begin with the raw amino-acid sequence, 439 residues long: Adenylosuccinate synthetase (439 aa).

Residues 25–31 (GDEGKGK), 53–55 (GHT), and Lys-62 contribute to the GTP site. Asp-26 functions as the Proton acceptor in the catalytic mechanism. The Mg(2+) site is built by Asp-26 and Gly-53. IMP-binding positions include 26–29 (DEGK) and 51–54 (NAGH). Catalysis depends on His-54, which acts as the Proton donor. Thr-141, Arg-155, Asn-232, and Thr-247 together coordinate IMP. Thr-307 lines the GTP pocket. A substrate-binding site is contributed by 307-313 (TTTKRPR). Arg-311 serves as a coordination point for IMP. GTP-binding positions include Arg-313, 339–341 (KLD), and 425–427 (GVG).

It belongs to the adenylosuccinate synthetase family. In terms of assembly, homodimer. Mg(2+) serves as cofactor.

The protein resides in the cytoplasm. The catalysed reaction is IMP + L-aspartate + GTP = N(6)-(1,2-dicarboxyethyl)-AMP + GDP + phosphate + 2 H(+). It participates in purine metabolism; AMP biosynthesis via de novo pathway; AMP from IMP: step 1/2. Plays an important role in the salvage pathway for purine nucleotide biosynthesis. Catalyzes the first commited step in the biosynthesis of AMP from IMP. This is Adenylosuccinate synthetase (ADSS) from Plasmodium berghei (strain Anka).